A 660-amino-acid chain; its full sequence is tRNA 5-methylaminomethyl-2-thiouridine biosynthesis bifunctional protein MnmC (660 aa).

Residues 1–242 (MTDRIVPATL…KRAMLVGEFA (242 aa)) are tRNA (mnm(5)s(2)U34)-methyltransferase. An FAD-dependent cmnm(5)s(2)U34 oxidoreductase region spans residues 266 to 660 (IGAGLAGCAV…VRALRHGRVA (395 aa)).

It in the N-terminal section; belongs to the methyltransferase superfamily. tRNA (mnm(5)s(2)U34)-methyltransferase family. In the C-terminal section; belongs to the DAO family. It depends on FAD as a cofactor.

The protein resides in the cytoplasm. The catalysed reaction is 5-aminomethyl-2-thiouridine(34) in tRNA + S-adenosyl-L-methionine = 5-methylaminomethyl-2-thiouridine(34) in tRNA + S-adenosyl-L-homocysteine + H(+). In terms of biological role, catalyzes the last two steps in the biosynthesis of 5-methylaminomethyl-2-thiouridine (mnm(5)s(2)U) at the wobble position (U34) in tRNA. Catalyzes the FAD-dependent demodification of cmnm(5)s(2)U34 to nm(5)s(2)U34, followed by the transfer of a methyl group from S-adenosyl-L-methionine to nm(5)s(2)U34, to form mnm(5)s(2)U34. In Burkholderia mallei (strain NCTC 10247), this protein is tRNA 5-methylaminomethyl-2-thiouridine biosynthesis bifunctional protein MnmC.